The primary structure comprises 1827 residues: Phenolphthiocerol/phthiocerol polyketide synthase subunit C (1827 aa).

Residues 35-461 (CEPVAVVGIG…GTNAHVVVEQ (427 aa)) form the Ketosynthase family 3 (KS3) domain. Active-site for beta-ketoacyl synthase activity residues include Cys-207, His-342, and His-383. Residues 566–876 (VFVYSGQGSQ…LAAVGVAASE (311 aa)) form an acyltransferase region. The active-site For malonyltransferase activity is the Ser-654. Positions 910-1037 (HPLLGAHIEM…AKVEQSPREC (128 aa)) are N-terminal hotdog fold. The dehydratase stretch occupies residues 910–1076 (HPLLGAHIEM…QHHGPAFAAL (167 aa)). Residues 910-1198 (HPLLGAHIEM…LRRVERRAVP (289 aa)) form the PKS/mFAS DH domain. His-942 (proton acceptor; for dehydratase activity) is an active-site residue. The C-terminal hotdog fold stretch occupies residues 1050–1198 (GTTVSPADFY…LRRVERRAVP (149 aa)). Asp-1111 functions as the Proton donor; for dehydratase activity in the catalytic mechanism. Residues 1439 to 1617 (ASYVVTGGLG…VINWGPWSEV (179 aa)) form a beta-ketoacyl reductase region. Residue 1440-1485 (SYVVTGGLGGLGLVVARWLVDRGAGRVVLGGRSDPTDEQCNVLAEL) participates in NADP(+) binding. Residues 1706-1785 (RAVTERMCAR…DLTADLMRQL (80 aa)) form the Carrier domain. Position 1745 is an O-(pantetheine 4'-phosphoryl)serine (Ser-1745). The segment covering 1807 to 1820 (RAAARHGAAMRRRP) has biased composition (basic residues). The interval 1807 to 1827 (RAAARHGAAMRRRPKPEVQGG) is disordered.

The cofactor is NADP(+). Pantetheine 4'-phosphate is required as a cofactor.

The enzyme catalyses icosanoyl-[(phenol)carboxyphthiodiolenone synthase] + 2 (S)-methylmalonyl-CoA + 3 malonyl-CoA + 5 NADPH + 10 H(+) = C32-carboxyphthiodiolenone-[(phenol)carboxyphthiodiolenone synthase] + 5 CO2 + 5 NADP(+) + 5 CoA + 2 H2O. It carries out the reaction docosanoyl-[(phenol)carboxyphthiodiolenone synthase] + 2 (S)-methylmalonyl-CoA + 3 malonyl-CoA + 5 NADPH + 10 H(+) = C34-carboxyphthiodiolenone-[(phenol)carboxyphthiodiolenone synthase] + 5 CO2 + 5 NADP(+) + 5 CoA + 2 H2O. It catalyses the reaction 17-(4-hydroxyphenyl)heptadecanoyl-[(phenol)carboxyphthiodiolenone synthase] + 2 (S)-methylmalonyl-CoA + 3 malonyl-CoA + 5 NADPH + 10 H(+) = C35-(phenol)carboxyphthiodiolenone-[(phenol)carboxyphthiodiolenone synthase] + 5 CO2 + 5 NADP(+) + 5 CoA + 2 H2O. The catalysed reaction is 19-(4-hydroxyphenyl)nonadecanoyl-[(phenol)carboxyphthiodiolenone synthase] + 2 (S)-methylmalonyl-CoA + 3 malonyl-CoA + 5 NADPH + 10 H(+) = C37-(phenol)carboxyphthiodiolenone-[(phenol)carboxyphthiodiolenone synthase] + 5 CO2 + 5 NADP(+) + 5 CoA + 2 H2O. The protein operates within lipid metabolism; fatty acid biosynthesis. Its function is as follows. Part of the PpsABCDE complex involved in the biosynthesis of the lipid core common to phthiocerols and phenolphthiocerols by successive additions of malonyl-CoA or methylmalonyl-CoA extender units. PpsA can accept as substrate the activated forms of either icosanoyl (C20), docosanoyl (C22) or lignoceroyl (C24) groups from FadD26, or a (4-hydroxyphenyl)-C17 or (4-hydroxyphenyl)-C19 fatty acyl from FadD29. PpsA initiates the biosynthesis and extends its substrate using a malonyl-CoA extender unit. The PpsB and PpsC proteins add the second and third malonyl-CoA extender units. PpsD adds an (R)-methylmalonyl unit and PpsE adds a second (R)-methylmalonyl unit. The incorporation of the methylmalonyl units results in formation of two branched methyl groups in the elongated product. The sequence is that of Phenolphthiocerol/phthiocerol polyketide synthase subunit C (ppsD) from Mycobacterium tuberculosis (strain CDC 1551 / Oshkosh).